The chain runs to 853 residues: Leucine-rich repeat and death domain-containing protein 1 (853 aa).

The disordered stretch occupies residues 1-78 (MSEDGSNVEP…EEKNTGIPFS (78 aa)). A compositionally biased stretch (acidic residues) spans 19–31 (LEEPGSEISDLLD). The segment covering 56 to 65 (QSAASFTSQL) has biased composition (polar residues). LRR repeat units lie at residues 133–157 (MKSD…IVKV), 159–180 (YVKY…DPGD), 183–204 (GLEI…IQLF), 206–227 (NLKI…LLQL), 229–251 (NMRQ…EHLR), 252–274 (YLET…SSLK), 275–297 (NLRI…CFLP), 298–319 (KLNS…VREL), 321–342 (NLES…IFQL), 344–365 (KIKE…IENF), 367–388 (ELRL…ISHC), 390–411 (NLES…IRKL), 413–435 (NLRQ…SHLS), 436–457 (NIHI…IKNC), 459–481 (KITR…CALQ), 482–503 (SLDY…MSFS), 505–527 (QLLH…CSLT), 528–549 (NLEY…ISAM), 551–573 (SLHV…CSLK), 574–596 (NLRV…SKLK), 597–618 (RIQK…LCQL), 620–641 (TLEE…PEEV), 646–668 (QLKI…GELR), 669–690 (SLVS…FLSL), 692–713 (VLQS…IYKL), and 715–736 (SLKE…ICKG). A Death domain is found at 757–845 (LEKIFNIVAN…DIMDKITALN (89 aa)).

In Mus musculus (Mouse), this protein is Leucine-rich repeat and death domain-containing protein 1 (Lrrd1).